Reading from the N-terminus, the 1653-residue chain is Protein TOPAZ1 (1653 aa).

3 disordered regions span residues 1-94, 284-303, and 415-442; these read MRPP…TDLV, YSVE…KSGK, and ISST…SETE. A compositionally biased stretch (basic and acidic residues) spans 63 to 78; the sequence is GREETEGDKLAKENGK. Residues 423–442 show a composition bias toward basic and acidic residues; it reads SDGHHMEKRSPRGDLRSETE.

Restricted to testis, where it localizes to germ cells.

It localises to the cytoplasm. It is found in the cytosol. Important for normal spermatogenesis and male fertility. Specifically required for progression to the post-meiotic stages of spermatocyte development. Seems to be necessary for normal expression levels of a number of testis-expressed gene transcripts, although its role in this process is unclear. The sequence is that of Protein TOPAZ1 from Mus musculus (Mouse).